The following is a 166-amino-acid chain: Arginine repressor (166 aa).

This sequence belongs to the ArgR family.

The protein localises to the cytoplasm. The protein operates within amino-acid biosynthesis; L-arginine biosynthesis [regulation]. Regulates arginine biosynthesis genes. The chain is Arginine repressor from Mycobacterium ulcerans (strain Agy99).